Here is a 481-residue protein sequence, read N- to C-terminus: Argininosuccinate lyase (481 aa).

The protein belongs to the lyase 1 family. Argininosuccinate lyase subfamily.

It is found in the cytoplasm. It catalyses the reaction 2-(N(omega)-L-arginino)succinate = fumarate + L-arginine. It functions in the pathway amino-acid biosynthesis; L-arginine biosynthesis; L-arginine from L-ornithine and carbamoyl phosphate: step 3/3. The polypeptide is Argininosuccinate lyase (Methanococcus vannielii (strain ATCC 35089 / DSM 1224 / JCM 13029 / OCM 148 / SB)).